Reading from the N-terminus, the 257-residue chain is NAD-capped RNA hydrolase NudC (257 aa).

Substrate is bound at residue R69. 2 residues coordinate Zn(2+): C98 and C101. E111 provides a ligand contact to substrate. Residues C116 and C119 each coordinate Zn(2+). Y124 serves as a coordination point for substrate. Residues 125-248 (PQIAPCIIVA…TVARRLIEDT (124 aa)) form the Nudix hydrolase domain. Positions 158, 174, and 178 each coordinate a divalent metal cation. The Nudix box motif lies at 159-180 (GFVEVGETLEQAVAREVMEESG). Substrate is bound at residue 192–199 (QPWPFPQS). E219 is an a divalent metal cation binding site. Residue A241 coordinates substrate.

Belongs to the Nudix hydrolase family. NudC subfamily. As to quaternary structure, homodimer. Requires Mg(2+) as cofactor. It depends on Mn(2+) as a cofactor. Zn(2+) is required as a cofactor.

It catalyses the reaction a 5'-end NAD(+)-phospho-ribonucleoside in mRNA + H2O = a 5'-end phospho-adenosine-phospho-ribonucleoside in mRNA + beta-nicotinamide D-ribonucleotide + 2 H(+). The enzyme catalyses NAD(+) + H2O = beta-nicotinamide D-ribonucleotide + AMP + 2 H(+). It carries out the reaction NADH + H2O = reduced beta-nicotinamide D-ribonucleotide + AMP + 2 H(+). Its function is as follows. mRNA decapping enzyme that specifically removes the nicotinamide adenine dinucleotide (NAD) cap from a subset of mRNAs by hydrolyzing the diphosphate linkage to produce nicotinamide mononucleotide (NMN) and 5' monophosphate mRNA. The NAD-cap is present at the 5'-end of some mRNAs and stabilizes RNA against 5'-processing. Has preference for mRNAs with a 5'-end purine. Catalyzes the hydrolysis of a broad range of dinucleotide pyrophosphates. This Salmonella heidelberg (strain SL476) protein is NAD-capped RNA hydrolase NudC.